A 311-amino-acid chain; its full sequence is Pyrimidine-specific ribonucleoside hydrolase RihA (311 aa).

His240 is an active-site residue.

The protein belongs to the IUNH family. RihA subfamily.

In terms of biological role, hydrolyzes cytidine or uridine to ribose and cytosine or uracil, respectively. This chain is Pyrimidine-specific ribonucleoside hydrolase RihA, found in Salmonella typhimurium (strain LT2 / SGSC1412 / ATCC 700720).